A 365-amino-acid polypeptide reads, in one-letter code: Chorismate synthase (365 aa).

NADP(+) is bound by residues R48 and R54. FMN-binding positions include 125–127 (RSS), 238–239 (NA), G278, 293–297 (KPTSS), and R319.

Belongs to the chorismate synthase family. As to quaternary structure, homotetramer. FMNH2 serves as cofactor.

The catalysed reaction is 5-O-(1-carboxyvinyl)-3-phosphoshikimate = chorismate + phosphate. It functions in the pathway metabolic intermediate biosynthesis; chorismate biosynthesis; chorismate from D-erythrose 4-phosphate and phosphoenolpyruvate: step 7/7. Its function is as follows. Catalyzes the anti-1,4-elimination of the C-3 phosphate and the C-6 proR hydrogen from 5-enolpyruvylshikimate-3-phosphate (EPSP) to yield chorismate, which is the branch point compound that serves as the starting substrate for the three terminal pathways of aromatic amino acid biosynthesis. This reaction introduces a second double bond into the aromatic ring system. The chain is Chorismate synthase from Janthinobacterium sp. (strain Marseille) (Minibacterium massiliensis).